Here is a 156-residue protein sequence, read N- to C-terminus: Ribosome maturation factor RimP (156 aa).

This sequence belongs to the RimP family.

Its subcellular location is the cytoplasm. Functionally, required for maturation of 30S ribosomal subunits. In Synechococcus sp. (strain JA-2-3B'a(2-13)) (Cyanobacteria bacterium Yellowstone B-Prime), this protein is Ribosome maturation factor RimP.